The chain runs to 546 residues: Membrane protein insertase YidC (546 aa).

A helical membrane pass occupies residues 8–28 (ILLATVLSVGILILWQVIFPT). Positions 31–70 (APPKPAHPPAAEVAKPAAPASPAPGAAAPAVPAPPPDAPE) are disordered. Low complexity predominate over residues 39-60 (PAAEVAKPAAPASPAPGAAAPA). The next 5 membrane-spanning stretches (helical) occupy residues 326 to 346 (IDYGAVAKFFALFARGLLYVM), 356 to 376 (WGVAIILLTVLVRLVLFPLTY), 422 to 442 (LGGCLPMLLQMPVWFALYAAL), 459 to 479 (LTAHDPYFILPIAMGISSFVM), and 498 to 518 (FFPGFFTVIMLFVPGGLTLYI).

Belongs to the OXA1/ALB3/YidC family. Type 1 subfamily. In terms of assembly, interacts with the Sec translocase complex via SecD. Specifically interacts with transmembrane segments of nascent integral membrane proteins during membrane integration.

It is found in the cell inner membrane. Its function is as follows. Required for the insertion and/or proper folding and/or complex formation of integral membrane proteins into the membrane. Involved in integration of membrane proteins that insert both dependently and independently of the Sec translocase complex, as well as at least some lipoproteins. Aids folding of multispanning membrane proteins. The chain is Membrane protein insertase YidC from Anaeromyxobacter dehalogenans (strain 2CP-1 / ATCC BAA-258).